Here is a 423-residue protein sequence, read N- to C-terminus: Glutaminase (423 aa).

The segment at 27–312 is glutaminase; sequence GEVAQYIPQL…LSEDMGLHLM (286 aa). Substrate-binding residues include S69, N119, E165, N172, Y196, Y248, and V266. An STAS domain is found at 321 to 423; it reads AVRAIEERGD…SPQVDDPEEL (103 aa).

The protein belongs to the glutaminase family. As to quaternary structure, homotetramer.

It carries out the reaction L-glutamine + H2O = L-glutamate + NH4(+). This chain is Glutaminase (glsA), found in Corynebacterium efficiens (strain DSM 44549 / YS-314 / AJ 12310 / JCM 11189 / NBRC 100395).